The primary structure comprises 61 residues: Small ribosomal subunit protein uS14 (61 aa).

Residues cysteine 24, cysteine 27, cysteine 40, and cysteine 43 each contribute to the Zn(2+) site.

It belongs to the universal ribosomal protein uS14 family. Zinc-binding uS14 subfamily. As to quaternary structure, part of the 30S ribosomal subunit. Contacts proteins S3 and S10. Zn(2+) is required as a cofactor.

In terms of biological role, binds 16S rRNA, required for the assembly of 30S particles and may also be responsible for determining the conformation of the 16S rRNA at the A site. This is Small ribosomal subunit protein uS14 from Clostridium botulinum (strain 657 / Type Ba4).